The sequence spans 193 residues: Transcriptional regulator RamR (193 aa).

The region spanning 7–66 (EDKKQALLEAATQAIAQSGIAASTAVIARNAGVAEGTLFRYFATKDELINTLYLHLKQDL) is the HTH tetR-type domain. The segment at residues 29-48 (STAVIARNAGVAEGTLFRYF) is a DNA-binding region (H-T-H motif).

Homodimer. May bind DNA either as a homodimer or as a pair of homodimers. Various chemicals reduce DNA-binding in vitro, including bile acids, such as cholic and chenodeoxycholic acids, and antimicrobial drugs, such as berberine, crystal violet, dequalinium, ethidium bromide and rhodamine 6G. Binds small regulatory RNA StyR3.

In terms of biological role, transcriptional regulator. Represses the transcription of the transcriptional activator RamA and, thereby, leads to repression of the expression of the efflux pump subunits AcrA and AcrB, and TolC. Acts by binding directly to the promoter region of the ramA gene. Promoter binding may be inhibited partially by the small regulatory RNA StyR3, perhaps thereby ensuring a basal level of expression of RamA. In Salmonella typhimurium (strain LT2 / SGSC1412 / ATCC 700720), this protein is Transcriptional regulator RamR.